The primary structure comprises 445 residues: Solute carrier family 52, riboflavin transporter, member 2 (445 aa).

Helical transmembrane passes span 14–34 (LLVA…WVEL), 47–67 (LPSY…VVTL), 86–106 (VLGM…APVA), 112–132 (VAFL…NVTF), 147–167 (FFLG…VQGV), and 196–216 (FFWA…GLLL). Positions 228–264 (ELGSGLQVGAPGAEEEVEESSPLQEPPSQAAGTTPGP) are disordered. Residues 247–258 (SSPLQEPPSQAA) show a composition bias toward low complexity. Transmembrane regions (helical) follow at residues 277–297 (ACLL…LPAV), 312–332 (LAVV…MGVL), 339–359 (LGGL…LAVL), 366–386 (VGTS…LGVF), and 404–424 (ALLA…VAMF).

Belongs to the riboflavin transporter family. Highly expressed in brain, fetal brain and salivary gland. Weakly expressed in other tissues.

It is found in the cell membrane. It catalyses the reaction riboflavin(in) = riboflavin(out). Riboflavin transport is Na(+)-independent but moderately pH-sensitive. Activity is strongly inhibited by riboflavin analogs, such as lumiflavin. Weakly inhibited by flavin adenine dinucleotide (FAD) and flavin mononucleotide (FMN). Functionally, plasma membrane transporter mediating the uptake by cells of the water soluble vitamin B2/riboflavin that plays a key role in biochemical oxidation-reduction reactions of the carbohydrate, lipid, and amino acid metabolism. Humans are unable to synthesize vitamin B2/riboflavin and must obtain it via intestinal absorption. May also act as a receptor for 4-hydroxybutyrate. Its function is as follows. (Microbial infection) In case of infection by retroviruses, acts as a cell receptor to retroviral envelopes similar to the porcine endogenous retrovirus (PERV-A). The chain is Solute carrier family 52, riboflavin transporter, member 2 (SLC52A2) from Homo sapiens (Human).